The sequence spans 7192 residues: Nonribosomal peptide synthetase gloA (7192 aa).

The span at 1-48 shows a compositional bias: polar residues; it reads MTPSRSLENGEKQMNWNESPQTASPKNVLRDSNSNGNYVNGHGTNING. Residues 1–52 are disordered; the sequence is MTPSRSLENGEKQMNWNESPQTASPKNVLRDSNSNGNYVNGHGTNINGDGSD. The Carrier 1 domain maps to 105–181; it reads HSTSKFKEEF…GLFATANFRP (77 aa). Residue S142 is modified to O-(pantetheine 4'-phosphoryl)serine. The condensation 1 stretch occupies residues 239 to 634; it reads EDVYPCTPLQ…TYTVQCLCNP (396 aa). Residues 675–1047 form an adenylation 1 region; sequence QDQVNIQPAK…SLMYLGRCDS (373 aa). The 77-residue stretch at 1190–1266 folds into the Carrier 2 domain; that stretch reads APSTDAEKQV…DLAFVIQRRL (77 aa). An O-(pantetheine 4'-phosphoryl)serine modification is found at S1227. A condensation 2 region spans residues 1316–1736; it reads EDIYPCTPLQ…MSWLSDYDEE (421 aa). The tract at residues 1758–2154 is adenylation 2; sequence QEQTKLRPNA…GRRDTQIKIR (397 aa). In terms of domain architecture, Carrier 3 spans 2288-2364; that stretch reads APSTREECLV…ELAELLAKRS (77 aa). At S2325 the chain carries O-(pantetheine 4'-phosphoryl)serine. Residues 2407–2829 are condensation 3; sequence VEDVYPCTPL…LIAPEDQEQI (423 aa). The tract at residues 2849–3245 is adenylation 3; the sequence is YKQVMARPQA…GRRDDQIKIR (397 aa). The Carrier 4 domain occupies 3378–3455; the sequence is TPSTKMEKVI…DLASVMTEHR (78 aa). The residue at position 3415 (S3415) is an O-(pantetheine 4'-phosphoryl)serine. Residues 3502–3891 form a condensation 4 region; sequence EDIYPCTALQ…NGVLDQFVYI (390 aa). The adenylation 4 stretch occupies residues 3920–4320; the sequence is QEQALARPTA…ARRDMQVKIR (401 aa). The Carrier 5 domain maps to 4453-4529; sequence LPSTQVELQL…ELAVILDGRK (77 aa). S4490 carries the post-translational modification O-(pantetheine 4'-phosphoryl)serine. Residues 4574-4971 are condensation 5; it reads EDIYPCTPLQ…QFEYVVQKFH (398 aa). Residues 5013-5414 are adenylation 5; it reads DDHVAARPMA…GRQDLQVKIR (402 aa). Positions 5551-5627 constitute a Carrier 6 domain; it reads APDTDLGRLI…DLVNTLSNRS (77 aa). At S5588 the chain carries O-(pantetheine 4'-phosphoryl)serine. Positions 5674–6071 are condensation 6; that stretch reads EDVYPSTPLQ…CVVQRILTQS (398 aa). The segment at 6111-6507 is adenylation 6; the sequence is QAQVKKSPAA…GRRDLQVKIR (397 aa). In terms of domain architecture, Carrier 7 spans 6645-6721; that stretch reads NPSTTMERQL…DLAVVLTDRL (77 aa). Position 6682 is an O-(pantetheine 4'-phosphoryl)serine (S6682). Positions 6795–7178 are condensation 7; that stretch reads NGPCDTRALK…NPLSPVKQVL (384 aa).

This sequence belongs to the NRP synthetase family.

It functions in the pathway mycotoxin biosynthesis. Its function is as follows. Nonribosomal peptide synthetase; part of the gene cluster that mediates the biosynthesis of pneumocandins, lipohexapeptides of the echinocandin family that prevent fungal cell wall formation by non-competitive inhibition of beta-1,3-glucan synthase. The 10,12-dimethylmyristoyl side chain is synthesized by the reducing polyketide synthase gloL/GLPKS4. The thioesterase gloN/GLHYD exclusively interacts with gloL/GLPKS4 to maintain turnover of the polyketide side chain. The 10R,12S-dimethylmyristic acid is then transferred to the first thiolation domain of the nonribosomal peptide synthetase gloA/GLNRPS4 by the acyl-AMP ligase gloD/GLligase, followed by its acylation to L-ornithine to trigger elongation of the cyclic hexapeptide. L-ornithine, 4R-hydroxyl-L-proline (generated from L-proline by the dioxygenase gloF/GLOXY2), 3S-hydroxyl-L-homotyrosine (generated by gloG/GLHtyB, gloH/GLHtyA, gloI/GLHtyC, gloJ/GLHtyD and hydroxylated at C-3 by the dioxygenase gloM/GLOXY1), 3R-hydroxyl-L-glutamine (generated from L-glutamine probably by the dioxygenase gloE/GLOXY3) and 3S-hydroxyl-L-proline (generated from L-proline by the dioxygenase gloF/GLOXY2 to yield pneumocandin B0), or 3S-hydroxyl-4S-methyl-L-proline (generated from L-leucine by the dioxygenase gloC/GLOXY4 to yield pneumocandin A0) are sequentially added to the growing chain. The last C domain of gloA/GLNRPS4 is proposed to be responsible for cyclization by condensation to form the peptide bond between L-ornithine and 3S-hydroxyl-4S-methyl-L-proline (for pneumocandin A0) or 3S-hydroxyl-L-proline (for pneumocandin B0). Finally, the subsequent C-4 hydroxylation of 3S-hydroxyl-L-homotyrosine and L-ornithine dihydroxylation at C-4 and C-5 are performed by the cytochrome P450 monooxygenases gloP/GLP450-1 and gloO/GLP450-2, respectively. In Glarea lozoyensis (strain ATCC 20868 / MF5171), this protein is Nonribosomal peptide synthetase gloA.